An 817-amino-acid chain; its full sequence is ABC transporter G family member STR (817 aa).

A disordered region spans residues 1 to 30 (MARLERDGTNKSLESLMDSHKPGGTTTNLN). At 1–542 (MARLERDGTN…RTVLNVIRTP (542 aa)) the chain is on the cytoplasmic side. The 252-residue stretch at 43 to 294 (LEFTNLSYSI…LSGFGRPVPD (252 aa)) folds into the ABC transporter domain. 87–94 (GPSGAGKS) contributes to the ATP binding site. 3 disordered regions span residues 321–349 (QYQH…RRNT), 362–395 (GFTA…LERR), and 439–463 (RPPS…GPRS). The span at 362-375 (GFTAGTPQPDSSQF) shows a compositional bias: polar residues. Residues 377 to 388 (LDDDDNDDDENF) are compositionally biased toward acidic residues. A helical membrane pass occupies residues 543–563 (ELFASREIVLTVMALVLSTIF). The Extracellular segment spans residues 564 to 579 (KNLGDTTFIDINRLLN). The helical transmembrane segment at 580-600 (FYIFAVCLVFFSSNDAVPSFI) threads the bilayer. Topologically, residues 601-621 (MERFIFIRETSHNAYRASSYV) are cytoplasmic. The helical transmembrane segment at 622–642 (ISSLIVYLPFFAVQGLTFAVI) threads the bilayer. The Extracellular portion of the chain corresponds to 643–657 (TKLMLHLKSNLFNFW). Residues 658–678 (MILFASLITTNAYVMLVSALV) traverse the membrane as a helical segment. Residues 679 to 681 (PSY) are Cytoplasmic-facing. The chain crosses the membrane as a helical span at residues 682–702 (ITGYAVVIATTALFFLTCGFF). At 703–787 (LKRTQIPAYW…TMDITMESLW (85 aa)) the chain is on the extracellular side. Asn762 is a glycosylation site (N-linked (GlcNAc...) asparagine). Residues 788–808 (YDILILLAWGVLYRFFFYLVL) traverse the membrane as a helical segment. At 809 to 817 (RFYSKNERK) the chain is on the cytoplasmic side.

Belongs to the ABC transporter superfamily. ABCG family. Stunted arbuscule (STR) subfamily. Heterodimerizes with STR2; the resulting transporter is located in the peri-arbuscular membrane. In terms of tissue distribution, expressed constitutively in the vascular tissue of roots.

The protein resides in the cell membrane. Together with STR2, required for arbuscule development in arbuscular mycorrhizal (AM) symbiosis. This is ABC transporter G family member STR from Medicago truncatula (Barrel medic).